We begin with the raw amino-acid sequence, 435 residues long: Glutamate-1-semialdehyde 2,1-aminomutase (435 aa).

N6-(pyridoxal phosphate)lysine is present on Lys-270.

It belongs to the class-III pyridoxal-phosphate-dependent aminotransferase family. HemL subfamily. In terms of assembly, homodimer. It depends on pyridoxal 5'-phosphate as a cofactor.

Its subcellular location is the cytoplasm. It carries out the reaction (S)-4-amino-5-oxopentanoate = 5-aminolevulinate. The protein operates within porphyrin-containing compound metabolism; protoporphyrin-IX biosynthesis; 5-aminolevulinate from L-glutamyl-tRNA(Glu): step 2/2. In Wigglesworthia glossinidia brevipalpis, this protein is Glutamate-1-semialdehyde 2,1-aminomutase.